The chain runs to 135 residues: CDGSH iron-sulfur domain-containing protein 2A (135 aa).

Residues 1–37 (MVLESIARVIKVQLPAYLKRLPIPDSIAGFIRLTVSE) lie on the Lumenal side of the membrane. Residues 38–60 (WLRLLPFLGVLALLGYLAIRPFL) form a helical membrane-spanning segment. The Cytoplasmic segment spans residues 61 to 135 (LKKKQQKDSL…GPLILKKKEV (75 aa)). [2Fe-2S] cluster contacts are provided by Cys-99, Cys-101, Cys-110, and His-114.

This sequence belongs to the CISD protein family. CISD2 subfamily. As to quaternary structure, homodimer. Requires [2Fe-2S] cluster as cofactor.

It localises to the endoplasmic reticulum membrane. The protein resides in the mitochondrion outer membrane. Functionally, regulator of autophagy that contributes to antagonize becn1-mediated cellular autophagy at the endoplasmic reticulum. Participates in the interaction of bcl2 with becn1 and is required for bcl2-mediated depression of endoplasmic reticulum Ca(2+) stores during autophagy. The sequence is that of CDGSH iron-sulfur domain-containing protein 2A (cisd2-a) from Xenopus laevis (African clawed frog).